Here is a 143-residue protein sequence, read N- to C-terminus: Host transcription reprogramming factor 8 (143 aa).

A signal peptide spans 1–19 (MHTYKFIQIALLFASVALA). The span at 24 to 34 (PSPPNPPPVPQ) shows a compositional bias: pro residues. The disordered stretch occupies residues 24 to 43 (PSPPNPPPVPQLPNSETKSN). The C2H2-type 1 zinc finger occupies 48–71 (HSCEFCGVVKPSGPAYLEHYHQNH). Residues 77–99 (GKLATPSPPNPPPVPTQKVETHA) form a disordered region. Pro residues predominate over residues 82–91 (PSPPNPPPVP). A C2H2-type 2 zinc finger spans residues 103 to 126 (HGCEWCNKVEPSGPAYIKHYKENH).

The protein localises to the secreted. It is found in the host nucleus. Functionally, probable secreted effector that translocates into the nuclei of host cells to reprogram the expression of targeted genes by binding on effector binding elements in rice. The polypeptide is Host transcription reprogramming factor 8 (Pyricularia oryzae (strain 70-15 / ATCC MYA-4617 / FGSC 8958) (Rice blast fungus)).